Reading from the N-terminus, the 588-residue chain is Ribonuclease Y (588 aa).

A helical transmembrane segment spans residues 7-27; it reads VLLVAVLLLTVVVVGAVLVGV. The KH domain maps to 278-359; the sequence is VVSVLHLPGD…HRIEEVHDLA (82 aa). Residues 404–497 enclose the HD domain; that stretch reads VLKHLVESAH…TQASDACSGG (94 aa).

Belongs to the RNase Y family.

The protein resides in the cell membrane. Its function is as follows. Endoribonuclease that initiates mRNA decay. The chain is Ribonuclease Y from Salinispora tropica (strain ATCC BAA-916 / DSM 44818 / JCM 13857 / NBRC 105044 / CNB-440).